Here is a 105-residue protein sequence, read N- to C-terminus: Large ribosomal subunit protein bL21 (105 aa).

The protein belongs to the bacterial ribosomal protein bL21 family. In terms of assembly, part of the 50S ribosomal subunit. Contacts protein L20.

Its function is as follows. This protein binds to 23S rRNA in the presence of protein L20. The chain is Large ribosomal subunit protein bL21 from Rickettsia canadensis (strain McKiel).